The following is a 175-amino-acid chain: Cytidylate kinase (175 aa).

7–15 (GLPGSGTTT) is an ATP binding site.

It belongs to the cytidylate kinase family. Type 2 subfamily.

It localises to the cytoplasm. The catalysed reaction is CMP + ATP = CDP + ADP. It catalyses the reaction dCMP + ATP = dCDP + ADP. The polypeptide is Cytidylate kinase (Methanococcoides burtonii (strain DSM 6242 / NBRC 107633 / OCM 468 / ACE-M)).